Reading from the N-terminus, the 263-residue chain is Small ribosomal subunit protein uS2 (263 aa).

Residue S2 is modified to N-acetylserine. Positions 211-242 (EQTAEEEAEAAEGAEFEVEEEEVEQEWQEPAE) are enriched in acidic residues. Residues 211-263 (EQTAEEEAEAAEGAEFEVEEEEVEQEWQEPAEADWNASAPPADWNDAANAEAF) form a disordered region. Residues 246–263 (NASAPPADWNDAANAEAF) are compositionally biased toward low complexity.

This sequence belongs to the universal ribosomal protein uS2 family. In terms of assembly, component of the small ribosomal subunit. Mature ribosomes consist of a small (40S) and a large (60S) subunit. The 40S subunit contains about 33 different proteins and 1 molecule of RNA (18S). The 60S subunit contains about 49 different proteins and 3 molecules of RNA (25S, 5.8S and 5S). Interacts with RPS21.

Its subcellular location is the cytoplasm. Its function is as follows. Required for the assembly and/or stability of the 40S ribosomal subunit. Required for the processing of the 20S rRNA-precursor to mature 18S rRNA in a late step of the maturation of 40S ribosomal subunits. The chain is Small ribosomal subunit protein uS2 from Komagataella phaffii (strain GS115 / ATCC 20864) (Yeast).